We begin with the raw amino-acid sequence, 221 residues long: Zingipain-1 (221 aa).

Disulfide bonds link Cys24–Cys65, Cys58–Cys98, and Cys155–Cys206. Residue Cys27 is part of the active site. Residues Asn95 and Asn156 are each glycosylated (N-linked (GlcNAc...) asparagine). Residues His161 and Asn181 contribute to the active site.

The protein belongs to the peptidase C1 family.

The enzyme catalyses Preferential cleavage of peptides with a proline residue at the P2 position.. Functionally, cysteine proteinase with a high level of diversity in substrate specificity, an amino acid bearing a proline residue at the P2 position is preferred. The chain is Zingipain-1 from Zingiber officinale (Ginger).